Here is a 712-residue protein sequence, read N- to C-terminus: T-box transcription factor TBX2 (712 aa).

A DNA-binding region (T-box) is located at residues 109–287; it reads LEAKELWDQF…NNPFAKGFRD (179 aa). Positions 313–450 are disordered; sequence PERDGAESDA…EGKEQGLAPL (138 aa). Residues 326 to 336 are compositionally biased toward pro residues; it reads DPPPAREPPTS. Phosphoserine occurs at positions 336, 342, and 360. Composition is skewed to basic and acidic residues over residues 363-372, 391-409, and 421-444; these read EPERLSEERA, TEPERARERRSPERGKEPA, and SLEKERAEARRKDEGRKEAAEGKE. Residues 518 to 601 are repression domain 1 (RD1); it reads GGNGGGGGPG…ATSAAAAAAA (84 aa). S622, S653, S657, and S676 each carry phosphoserine. Residues 637-687 are disordered; it reads LTTGLASEGSKAAGGNSREPSPLPELALRKVGAPSRGALSPSGSAKEAANE.

In terms of assembly, binds DNA as a monomer. Interacts with PML (isoform PML-2, isoform PML-3 and isoform PML-4). Expressed primarily in adult in kidney, lung, and placenta. Weak expression in heart and ovary.

It is found in the nucleus. In terms of biological role, transcription factor which acts as a transcriptional repressor. May also function as a transcriptional activator. Binds to the palindromic T site 5'-TTCACACCTAGGTGTGAA-3' DNA sequence, or a half-site, which are present in the regulatory region of several genes. Required for cardiac atrioventricular canal formation. May cooperate with NKX2.5 to negatively modulate expression of NPPA/ANF in the atrioventricular canal. May play a role as a positive regulator of TGFB2 expression, perhaps acting in concert with GATA4 in the developing outflow tract myocardium. Plays a role in limb pattern formation. Acts as a transcriptional repressor of ADAM10 gene expression, perhaps in concert with histone deacetylase HDAC1 as cofactor. Involved in branching morphogenesis in both developing lungs and adult mammary glands, via negative modulation of target genes; acting redundantly with TBX3. Required, together with TBX3, to maintain cell proliferation in the embryonic lung mesenchyme; perhaps acting downstream of SHH, BMP and TGFbeta signaling. Involved in modulating early inner ear development, acting independently of, and also redundantly with TBX3, in different subregions of the developing ear. Acts as a negative regulator of PML function in cellular senescence. Acts as a negative regulator of expression of CDKN1A/p21, IL33 and CCN4; repression of CDKN1A is enhanced in response to UV-induced stress, perhaps as a result of phosphorylation by p38 MAPK. Negatively modulates expression of CDKN2A/p14ARF and CDH1/E-cadherin. Plays a role in induction of the epithelial-mesenchymal transition (EMT). Plays a role in melanocyte proliferation, perhaps via regulation of cyclin CCND1. Involved in melanogenesis, acting via negative modulation of expression of DHICA oxidase/TYRP1 and P protein/OCA2. Involved in regulating retinal pigment epithelium (RPE) cell proliferation, perhaps via negatively modulating transcription of the transcription factor CEBPD. This is T-box transcription factor TBX2 (TBX2) from Homo sapiens (Human).